A 580-amino-acid polypeptide reads, in one-letter code: 2-succinyl-5-enolpyruvyl-6-hydroxy-3-cyclohexene-1-carboxylate synthase (580 aa).

Belongs to the TPP enzyme family. MenD subfamily. In terms of assembly, homodimer. Mg(2+) is required as a cofactor. Requires Mn(2+) as cofactor. Thiamine diphosphate serves as cofactor.

The enzyme catalyses isochorismate + 2-oxoglutarate + H(+) = 5-enolpyruvoyl-6-hydroxy-2-succinyl-cyclohex-3-ene-1-carboxylate + CO2. Its pathway is quinol/quinone metabolism; 1,4-dihydroxy-2-naphthoate biosynthesis; 1,4-dihydroxy-2-naphthoate from chorismate: step 2/7. It participates in quinol/quinone metabolism; menaquinone biosynthesis. In terms of biological role, catalyzes the thiamine diphosphate-dependent decarboxylation of 2-oxoglutarate and the subsequent addition of the resulting succinic semialdehyde-thiamine pyrophosphate anion to isochorismate to yield 2-succinyl-5-enolpyruvyl-6-hydroxy-3-cyclohexene-1-carboxylate (SEPHCHC). The chain is 2-succinyl-5-enolpyruvyl-6-hydroxy-3-cyclohexene-1-carboxylate synthase from Listeria monocytogenes serovar 1/2a (strain ATCC BAA-679 / EGD-e).